The sequence spans 879 residues: Leucine--tRNA ligase (879 aa).

The 'HIGH' region motif lies at 45 to 55; it reads PYPSGALHMGH. Positions 637–641 match the 'KMSKS' region motif; it reads KMSKS. An ATP-binding site is contributed by K640.

The protein belongs to the class-I aminoacyl-tRNA synthetase family.

The protein localises to the cytoplasm. It catalyses the reaction tRNA(Leu) + L-leucine + ATP = L-leucyl-tRNA(Leu) + AMP + diphosphate. This is Leucine--tRNA ligase from Xylella fastidiosa (strain 9a5c).